Reading from the N-terminus, the 158-residue chain is Transcription antitermination protein NusB (158 aa).

A compositionally biased stretch (basic and acidic residues) spans 1 to 12; sequence MKRVEKRAEKQG. The disordered stretch occupies residues 1-20; that stretch reads MKRVEKRAEKQGRGTARKSR.

Belongs to the NusB family.

Its function is as follows. Involved in transcription antitermination. Required for transcription of ribosomal RNA (rRNA) genes. Binds specifically to the boxA antiterminator sequence of the ribosomal RNA (rrn) operons. This chain is Transcription antitermination protein NusB, found in Nitrosospira multiformis (strain ATCC 25196 / NCIMB 11849 / C 71).